Reading from the N-terminus, the 266-residue chain is Small ribosomal subunit protein uS3 (266 aa).

Positions 39–107 (VREYLKKKLK…PVHVNIEEIR (69 aa)) constitute a KH type-2 domain. The disordered stretch occupies residues 214-266 (PVVEEVTEDKRPRRNARPGDRRPRRDGEGGAPGARRGGPRRGAGKPEDGKTGE). Composition is skewed to basic and acidic residues over residues 230–241 (RPGDRRPRRDGE) and 257–266 (GKPEDGKTGE).

This sequence belongs to the universal ribosomal protein uS3 family. As to quaternary structure, part of the 30S ribosomal subunit. Forms a tight complex with proteins S10 and S14.

Binds the lower part of the 30S subunit head. Binds mRNA in the 70S ribosome, positioning it for translation. The sequence is that of Small ribosomal subunit protein uS3 from Burkholderia mallei (strain NCTC 10247).